Consider the following 243-residue polypeptide: Type II restriction enzyme NlaIV (243 aa).

It carries out the reaction Endonucleolytic cleavage of DNA to give specific double-stranded fragments with terminal 5'-phosphates.. A P subtype restriction enzyme that recognizes the double-stranded sequence 5'-GGNNCC-3' and cleaves after N-3. The polypeptide is Type II restriction enzyme NlaIV (nlaIVR) (Neisseria lactamica).